A 359-amino-acid chain; its full sequence is N-acetylneuraminate-9-phosphate synthase (359 aa).

3 positions are modified to N6-acetyllysine: lysine 61, lysine 74, and lysine 79. Position 275 is a phosphoserine (serine 275). Lysine 290 is modified (N6-acetyllysine). The 60-residue stretch at 294–353 (SVVAKVKIPEGTILTMDMLTVKVGEPKGYPPEDIFNLVGKKVLVTVEEDDTIMEELVDNH) folds into the AFP-like domain.

In terms of tissue distribution, ubiquitous.

The enzyme catalyses aldehydo-N-acetyl-D-mannosamine 6-phosphate + phosphoenolpyruvate + H2O = N-acetylneuraminate 9-phosphate + phosphate. It carries out the reaction aldehydo-D-mannose 6-phosphate + phosphoenolpyruvate + H2O = 3-deoxy-D-glycero-beta-D-galacto-non-2-ulopyranosonate 9-phosphate + phosphate. Its function is as follows. Catalyzes the condensation of phosphoenolpyruvate (PEP) and N-acetylmannosamine 6-phosphate (ManNAc-6-P) to synthesize N-acetylneuraminate-9-phosphate (Neu5Ac-9-P). Also catalyzes the condensation of PEP and D-mannose 6-phosphate (Man-6-P) to produce 3-deoxy-D-glycero-beta-D-galacto-non-2-ulopyranosonate 9-phosphate (KDN-9-P). Neu5Ac-9-P and KDN-9-P are the phosphorylated forms of sialic acids N-acetylneuraminic acid (Neu5Ac) and deaminoneuraminic acid (KDN), respectively. Required for brain and skeletal development. In Homo sapiens (Human), this protein is N-acetylneuraminate-9-phosphate synthase.